A 356-amino-acid polypeptide reads, in one-letter code: tRNA N6-adenosine threonylcarbamoyltransferase (356 aa).

Residues His115 and His119 each coordinate Fe cation. Substrate is bound by residues Leu138–Gly142, Asp171, Gly184, and Asn283. Asp311 is a binding site for Fe cation.

The protein belongs to the KAE1 / TsaD family. Requires Fe(2+) as cofactor.

It localises to the cytoplasm. The catalysed reaction is L-threonylcarbamoyladenylate + adenosine(37) in tRNA = N(6)-L-threonylcarbamoyladenosine(37) in tRNA + AMP + H(+). Its function is as follows. Required for the formation of a threonylcarbamoyl group on adenosine at position 37 (t(6)A37) in tRNAs that read codons beginning with adenine. Is involved in the transfer of the threonylcarbamoyl moiety of threonylcarbamoyl-AMP (TC-AMP) to the N6 group of A37, together with TsaE and TsaB. TsaD likely plays a direct catalytic role in this reaction. This is tRNA N6-adenosine threonylcarbamoyltransferase from Prochlorococcus marinus (strain NATL2A).